A 347-amino-acid chain; its full sequence is D-alanine--D-alanine ligase (347 aa).

One can recognise an ATP-grasp domain in the interval 131-333 (KRVLESAGIA…YPKLIERLVD (203 aa)). 161–216 (EEKLAYPVFTKPSNMGSSVGISKSENQEELRQALKLAFRYDSRVLVEQGVNAREIE) provides a ligand contact to ATP. Mg(2+) is bound by residues aspartate 287, glutamate 300, and asparagine 302.

Belongs to the D-alanine--D-alanine ligase family. Mg(2+) is required as a cofactor. It depends on Mn(2+) as a cofactor.

It localises to the cytoplasm. The catalysed reaction is 2 D-alanine + ATP = D-alanyl-D-alanine + ADP + phosphate + H(+). It participates in cell wall biogenesis; peptidoglycan biosynthesis. In terms of biological role, cell wall formation. In Streptococcus pneumoniae serotype 4 (strain ATCC BAA-334 / TIGR4), this protein is D-alanine--D-alanine ligase.